A 347-amino-acid chain; its full sequence is Protein RecA (347 aa).

Position 64-71 (64-71 (GPESSGKT)) interacts with ATP.

It belongs to the RecA family.

The protein localises to the cytoplasm. Its function is as follows. Can catalyze the hydrolysis of ATP in the presence of single-stranded DNA, the ATP-dependent uptake of single-stranded DNA by duplex DNA, and the ATP-dependent hybridization of homologous single-stranded DNAs. It interacts with LexA causing its activation and leading to its autocatalytic cleavage. The protein is Protein RecA of Bacillus velezensis (strain DSM 23117 / BGSC 10A6 / LMG 26770 / FZB42) (Bacillus amyloliquefaciens subsp. plantarum).